The sequence spans 425 residues: Malate transporter MleP (425 aa).

11 helical membrane-spanning segments follow: residues 11 to 31 (GISLPLYAFFVAVIIVVTLLG), 35 to 55 (LDMVGLTLLLVTLGHLLYFIG), 65 to 85 (LGGGSVFTLIGATLLSFFHIV), 96 to 116 (FMGGKFGFLDFYIAALICGSI), 134 to 154 (IALITMVIGFFSVGLVGMLIG), 196 to 216 (IFSQLAPAVTFGNILAIIGAL), 246 to 266 (IKLDAQQIGTGMLFAFALLMA), 269 to 289 (ILNKFFPNIHQYAFMIIIVFI), 310 to 330 (VIMTNLTHAVLAGIGLALIDL), 339 to 359 (WQFVVLCLTSVVVMGLASWFL), and 401 to 421 (FAQMANRLCGAIVLIFGGILI).

This sequence belongs to the 2-hydroxycarboxylate transporter (2-HCT) (TC 2.A.24) family.

The protein resides in the cell membrane. It catalyses the reaction (S)-lactate(in) + (S)-malate(out) = (S)-lactate(out) + (S)-malate(in). The enzyme catalyses (R)-lactate(in) + (S)-malate(out) = (R)-lactate(out) + (S)-malate(in). It carries out the reaction glycolate(in) + (S)-malate(out) = glycolate(out) + (S)-malate(in). Functionally, secondary transporter involved in malolactic fermentation. Catalyzes the uptake of divalent malate into the cell coupled to the exit of monovalent lactate, a product of malate degradation (precursor/product exchange). The malate/lactate exchange is electrogenic and results in the generation of a membrane potential. Is highly selective for the S-enantiomer of malate. In the absence of lactate, MleP can also catalyze the proton-dependent transport of malate. In vitro, transports a range of substrates that contain the 2-hydroxycarboxylate motif, HO-CR(2)-COO(-), with a preference for malate, lactate and glycolate. Modification of the OH or the COO(-) groups of the 2-hydroxycarboxylate motif drastically reduces the affinity of the transporter for the substrates, indicating their relevance in substrate recognition. Significant activity is also observed with some 2-oxocarboxylates. Transports only poorly citromalate. Citrate binds to MleP but is not translocated. The protein is Malate transporter MleP of Lactococcus lactis subsp. lactis (strain IL1403) (Streptococcus lactis).